Consider the following 148-residue polypeptide: Transcriptional regulator MraZ (148 aa).

2 SpoVT-AbrB domains span residues 5–53 and 82–125; these read ETAI…AESE and AAHL…SEQA.

The protein belongs to the MraZ family. In terms of assembly, forms oligomers.

It is found in the cytoplasm. It localises to the nucleoid. The polypeptide is Transcriptional regulator MraZ (Stenotrophomonas maltophilia (strain R551-3)).